The chain runs to 362 residues: 3-dehydroquinate synthase (362 aa).

NAD(+) is bound by residues 71-76 (DGERYK), 105-109 (GVIGD), 129-130 (TT), lysine 142, lysine 151, and 169-172 (CLKT). Zn(2+)-binding residues include glutamate 184, histidine 247, and histidine 264.

This sequence belongs to the sugar phosphate cyclases superfamily. Dehydroquinate synthase family. Co(2+) serves as cofactor. The cofactor is Zn(2+). Requires NAD(+) as cofactor.

It is found in the cytoplasm. The enzyme catalyses 7-phospho-2-dehydro-3-deoxy-D-arabino-heptonate = 3-dehydroquinate + phosphate. Its pathway is metabolic intermediate biosynthesis; chorismate biosynthesis; chorismate from D-erythrose 4-phosphate and phosphoenolpyruvate: step 2/7. Catalyzes the conversion of 3-deoxy-D-arabino-heptulosonate 7-phosphate (DAHP) to dehydroquinate (DHQ). The protein is 3-dehydroquinate synthase of Salmonella arizonae (strain ATCC BAA-731 / CDC346-86 / RSK2980).